The chain runs to 855 residues: DNA mismatch repair protein MutS (855 aa).

613–620 (GPNMGGKS) is a binding site for ATP.

Belongs to the DNA mismatch repair MutS family.

Functionally, this protein is involved in the repair of mismatches in DNA. It is possible that it carries out the mismatch recognition step. This protein has a weak ATPase activity. In Azotobacter vinelandii (strain DJ / ATCC BAA-1303), this protein is DNA mismatch repair protein MutS.